The chain runs to 82 residues: MAVKERVGVVVSDKMDKTVVVAIEDRTAHPKYGKIVVRTKRYKAHDEDNRAKTGDRVRIQETRPLSRTKRWTVAEILESVGA.

The protein belongs to the universal ribosomal protein uS17 family. In terms of assembly, part of the 30S ribosomal subunit.

Its function is as follows. One of the primary rRNA binding proteins, it binds specifically to the 5'-end of 16S ribosomal RNA. The polypeptide is Small ribosomal subunit protein uS17 (Synechococcus elongatus (strain ATCC 33912 / PCC 7942 / FACHB-805) (Anacystis nidulans R2)).